A 468-amino-acid polypeptide reads, in one-letter code: Citrate synthase, mitochondrial (468 aa).

A mitochondrion-targeting transit peptide spans 1–30 (MSLITAGRLCARILGAKNSPCALIAARQAS). Active-site residues include H303 and H349. R358 contributes to the oxaloacetate binding site. D404 is a catalytic residue. Residues R430 and R450 each coordinate oxaloacetate.

It belongs to the citrate synthase family. In terms of assembly, homodimer.

It is found in the mitochondrion matrix. It carries out the reaction oxaloacetate + acetyl-CoA + H2O = citrate + CoA + H(+). Its pathway is carbohydrate metabolism; tricarboxylic acid cycle; isocitrate from oxaloacetate: step 1/2. In terms of biological role, key enzyme of the Krebs tricarboxylic acid cycle which catalyzes the synthesis of citrate from acetyl coenzyme A and oxaloacetate. This is Citrate synthase, mitochondrial (cs) from Xenopus tropicalis (Western clawed frog).